The sequence spans 88 residues: Probable glutaredoxin ssr2061 (88 aa).

C15 and C18 form a disulfide bridge.

The protein belongs to the glutaredoxin family.

Its function is as follows. Has a glutathione-disulfide oxidoreductase activity in the presence of NADPH and glutathione reductase. Reduces low molecular weight disulfides and proteins. This Synechocystis sp. (strain ATCC 27184 / PCC 6803 / Kazusa) protein is Probable glutaredoxin ssr2061.